Reading from the N-terminus, the 20-residue chain is Maximin-Hu (20 aa).

This sequence belongs to the bombinin family. As to expression, expressed by the skin glands.

Its subcellular location is the secreted. In terms of biological role, has antimicrobial activity. The polypeptide is Maximin-Hu (Bombina maxima (Giant fire-bellied toad)).